Here is a 25-residue protein sequence, read N- to C-terminus: Flagellar filament core protein flaB1 (25 aa).

The protein belongs to the bacterial flagellin family. In terms of assembly, the flagellum consists of an outer layer composed of two sheath proteins, flaA1 (44 kDa) and flaA2 (35 kDa) around a core that contains three proteins flaB1 (37 kDa), flaB2 (34 kDa) and flaB3 (32 kDa).

The protein resides in the periplasmic flagellum. It is found in the periplasm. Its function is as follows. Component of the core of the flagella. This Brachyspira hyodysenteriae (Treponema hyodysenteriae) protein is Flagellar filament core protein flaB1 (flaB1).